Reading from the N-terminus, the 241-residue chain is 1-(5-phosphoribosyl)-5-[(5-phosphoribosylamino)methylideneamino] imidazole-4-carboxamide isomerase (241 aa).

Asp-8 functions as the Proton acceptor in the catalytic mechanism. The active-site Proton donor is the Asp-131.

It belongs to the HisA/HisF family.

The protein localises to the cytoplasm. The enzyme catalyses 1-(5-phospho-beta-D-ribosyl)-5-[(5-phospho-beta-D-ribosylamino)methylideneamino]imidazole-4-carboxamide = 5-[(5-phospho-1-deoxy-D-ribulos-1-ylimino)methylamino]-1-(5-phospho-beta-D-ribosyl)imidazole-4-carboxamide. It participates in amino-acid biosynthesis; L-histidine biosynthesis; L-histidine from 5-phospho-alpha-D-ribose 1-diphosphate: step 4/9. The sequence is that of 1-(5-phosphoribosyl)-5-[(5-phosphoribosylamino)methylideneamino] imidazole-4-carboxamide isomerase from Sorangium cellulosum (strain So ce56) (Polyangium cellulosum (strain So ce56)).